Here is a 525-residue protein sequence, read N- to C-terminus: MTENIHKHRILILDFGSQYTQLVARRVRELGVYCELWAWDVTEAQIRDFNPSGIILSGGPESTTEENSPRAPQYVFEAGVPIFGVCYGMQTMAMQLGGHVEASNEREFGYAQVEVVNDSALVRGIEDALTADGKPLLDVWMSHGDKVTAIPSDFVTVASTESCPFAIMANEEKRFYGVQFHPEVTHTRQGMRMLERFVRDICQCEALWTPAKIIDDAVARIREQVGDDKVILGLSGGVDSSVTAMLLHRAIGKNLTCVFVDNGLLRLNEAEQVLDMFGDHFGLNIVHVPAEDRFLSALAGENDPEAKRKIIGRVFVEVFDEEALKLEDVKWLAQGTIYPDVIESAASATGKAHVIKSHHNVGGLPKEMKMGLVEPLKELFKDEVRKIGLELGLPYDMLYRHPFPGPGLGVRVLGEVKKEYCDLLRRADAIFIEELRKADLYDKVSQAFTVFLPVRSVGVMGDGRKYDWVVSLRAVETIDFMTAHWAHLPYDFLGRVSNRIINEVNGISRVVYDISGKPPATIEWE.

In terms of domain architecture, Glutamine amidotransferase type-1 spans 9–207 (RILILDFGSQ…VRDICQCEAL (199 aa)). C86 acts as the Nucleophile in catalysis. Catalysis depends on residues H181 and E183. Residues 208-400 (WTPAKIIDDA…LGLPYDMLYR (193 aa)) form the GMPS ATP-PPase domain. 235 to 241 (SGGVDSS) serves as a coordination point for ATP.

In terms of assembly, homodimer.

The enzyme catalyses XMP + L-glutamine + ATP + H2O = GMP + L-glutamate + AMP + diphosphate + 2 H(+). Its pathway is purine metabolism; GMP biosynthesis; GMP from XMP (L-Gln route): step 1/1. Its function is as follows. Catalyzes the synthesis of GMP from XMP. The protein is GMP synthase [glutamine-hydrolyzing] of Shigella flexneri.